Reading from the N-terminus, the 238-residue chain is tRNA (guanine-N(7)-)-methyltransferase (238 aa).

Residues glutamate 68, glutamate 93, aspartate 120, and aspartate 143 each contribute to the S-adenosyl-L-methionine site. Aspartate 143 is a catalytic residue. Residues lysine 147, aspartate 179, and 216 to 219 contribute to the substrate site; that span reads TKFE.

Belongs to the class I-like SAM-binding methyltransferase superfamily. TrmB family.

The catalysed reaction is guanosine(46) in tRNA + S-adenosyl-L-methionine = N(7)-methylguanosine(46) in tRNA + S-adenosyl-L-homocysteine. It functions in the pathway tRNA modification; N(7)-methylguanine-tRNA biosynthesis. Catalyzes the formation of N(7)-methylguanine at position 46 (m7G46) in tRNA. The protein is tRNA (guanine-N(7)-)-methyltransferase of Marinobacter nauticus (strain ATCC 700491 / DSM 11845 / VT8) (Marinobacter aquaeolei).